Reading from the N-terminus, the 41-residue chain is Augerpeptide hhe6.1 (41 aa).

3 disulfide bridges follow: Cys11–Cys32, Cys18–Cys35, and Cys31–Cys40.

As to expression, expressed by the venom duct.

Its subcellular location is the secreted. The protein is Augerpeptide hhe6.1 of Hastula hectica (Sea snail).